The chain runs to 255 residues: Gene 54 protein (255 aa).

The sequence is that of Gene 54 protein (54) from Mycobacterium (Mycobacteriophage L5).